Here is a 63-residue protein sequence, read N- to C-terminus: Large ribosomal subunit protein bL28 (63 aa).

This sequence belongs to the bacterial ribosomal protein bL28 family.

The protein is Large ribosomal subunit protein bL28 of Geobacter sulfurreducens (strain ATCC 51573 / DSM 12127 / PCA).